The following is a 554-amino-acid chain: 3-(3-hydroxy-phenyl)propionate/3-hydroxycinnamic acid hydroxylase (554 aa).

FAD-binding positions include glutamine 17–lysine 46 and phenylalanine 285–aspartate 295.

Belongs to the PheA/TfdB FAD monooxygenase family. FAD is required as a cofactor.

It catalyses the reaction 3-(3-hydroxyphenyl)propanoate + NADH + O2 + H(+) = 3-(2,3-dihydroxyphenyl)propanoate + NAD(+) + H2O. The enzyme catalyses (2E)-3-(3-hydroxyphenyl)prop-2-enoate + NADH + O2 + H(+) = (2E)-3-(2,3-dihydroxyphenyl)prop-2-enoate + NAD(+) + H2O. It participates in aromatic compound metabolism; 3-phenylpropanoate degradation. Its function is as follows. Catalyzes the insertion of one atom of molecular oxygen into position 2 of the phenyl ring of 3-(3-hydroxyphenyl)propionate (3-HPP) and hydroxycinnamic acid (3HCI). The polypeptide is 3-(3-hydroxy-phenyl)propionate/3-hydroxycinnamic acid hydroxylase (Escherichia coli O81 (strain ED1a)).